The sequence spans 238 residues: uncharacterized protein (238 aa).

2 disordered regions span residues 123 to 167 (FRQG…VHGG) and 180 to 238 (SAMG…AKRR). Over residues 152–161 (SGHSPSPGRH) the composition is skewed to low complexity. Residues 207–238 (HRGHGHRFRLLAPRSRPRQRRGGGSRAAAKRR) are compositionally biased toward basic residues.

This sequence belongs to the PNP/MTAP phosphorylase family.

This is an uncharacterized protein from Rhodospirillum rubrum.